The sequence spans 423 residues: Serine--tRNA ligase (423 aa).

L-serine is bound at residue Thr-231–Glu-233. Position 262–264 (Arg-262–Glu-264) interacts with ATP. Glu-285 is a binding site for L-serine. Glu-349–Ser-352 is an ATP binding site. Position 385 (Ser-385) interacts with L-serine.

The protein belongs to the class-II aminoacyl-tRNA synthetase family. Type-1 seryl-tRNA synthetase subfamily. As to quaternary structure, homodimer. The tRNA molecule binds across the dimer.

Its subcellular location is the cytoplasm. It catalyses the reaction tRNA(Ser) + L-serine + ATP = L-seryl-tRNA(Ser) + AMP + diphosphate + H(+). It carries out the reaction tRNA(Sec) + L-serine + ATP = L-seryl-tRNA(Sec) + AMP + diphosphate + H(+). The protein operates within aminoacyl-tRNA biosynthesis; selenocysteinyl-tRNA(Sec) biosynthesis; L-seryl-tRNA(Sec) from L-serine and tRNA(Sec): step 1/1. Functionally, catalyzes the attachment of serine to tRNA(Ser). Is also able to aminoacylate tRNA(Sec) with serine, to form the misacylated tRNA L-seryl-tRNA(Sec), which will be further converted into selenocysteinyl-tRNA(Sec). This chain is Serine--tRNA ligase, found in Coxiella burnetii (strain RSA 331 / Henzerling II).